A 159-amino-acid chain; its full sequence is SsrA-binding protein (159 aa).

The protein belongs to the SmpB family.

The protein localises to the cytoplasm. Its function is as follows. Required for rescue of stalled ribosomes mediated by trans-translation. Binds to transfer-messenger RNA (tmRNA), required for stable association of tmRNA with ribosomes. tmRNA and SmpB together mimic tRNA shape, replacing the anticodon stem-loop with SmpB. tmRNA is encoded by the ssrA gene; the 2 termini fold to resemble tRNA(Ala) and it encodes a 'tag peptide', a short internal open reading frame. During trans-translation Ala-aminoacylated tmRNA acts like a tRNA, entering the A-site of stalled ribosomes, displacing the stalled mRNA. The ribosome then switches to translate the ORF on the tmRNA; the nascent peptide is terminated with the 'tag peptide' encoded by the tmRNA and targeted for degradation. The ribosome is freed to recommence translation, which seems to be the essential function of trans-translation. The chain is SsrA-binding protein from Frankia casuarinae (strain DSM 45818 / CECT 9043 / HFP020203 / CcI3).